The following is a 526-amino-acid chain: Na(+)/H(+) antiporter NhaB (526 aa).

12 consecutive transmembrane segments (helical) span residues 25–45 (ILLFLVINPIAFYLDPFAAGW), 52–72 (IFTLAMALKCYPLQPGGLLAI), 89–109 (LVANIEVLLLLVFMVAGIYFM), 130–164 (LSLAFCLVSAFLSAFLDALTVIAVVISVATGFYAI), 204–224 (LMMHAAIGTALGGVCTLVGEP), 242–262 (IRMAPVTIPVFICGLLTCILV), 305–325 (AVIAIWLILGLAMHLAAVGLI), 350–370 (QEALPFTALLAVFFSVVAVII), 391–411 (LALFYLANGLLSMVSDNVFVG), 448–468 (VATPNGQAAFLFMLTSALAPL), 479–499 (MALPYTLVLGLVGFFSVELLL), and 505–525 (WFYQAGWLLPHSGAPAVLPAL).

It belongs to the NhaB Na(+)/H(+) (TC 2.A.34) antiporter family.

Its subcellular location is the cell inner membrane. The catalysed reaction is 2 Na(+)(in) + 3 H(+)(out) = 2 Na(+)(out) + 3 H(+)(in). Its function is as follows. Na(+)/H(+) antiporter that extrudes sodium in exchange for external protons. The sequence is that of Na(+)/H(+) antiporter NhaB from Aeromonas salmonicida (strain A449).